A 281-amino-acid polypeptide reads, in one-letter code: Pantothenate synthetase (281 aa).

ATP is bound at residue 30–37 (MGNLHAGH). Histidine 37 functions as the Proton donor in the catalytic mechanism. Glutamine 61 is a (R)-pantoate binding site. Position 61 (glutamine 61) interacts with beta-alanine. Residue 149–152 (GRKD) participates in ATP binding. Glutamine 155 lines the (R)-pantoate pocket. ATP is bound by residues valine 178 and 186–189 (MSSR).

It belongs to the pantothenate synthetase family. In terms of assembly, homodimer.

It is found in the cytoplasm. The enzyme catalyses (R)-pantoate + beta-alanine + ATP = (R)-pantothenate + AMP + diphosphate + H(+). It participates in cofactor biosynthesis; (R)-pantothenate biosynthesis; (R)-pantothenate from (R)-pantoate and beta-alanine: step 1/1. In terms of biological role, catalyzes the condensation of pantoate with beta-alanine in an ATP-dependent reaction via a pantoyl-adenylate intermediate. The sequence is that of Pantothenate synthetase from Shewanella amazonensis (strain ATCC BAA-1098 / SB2B).